The chain runs to 315 residues: Methionyl-tRNA formyltransferase (315 aa).

Residue 113-116 (SLLP) coordinates (6S)-5,6,7,8-tetrahydrofolate.

This sequence belongs to the Fmt family.

It carries out the reaction L-methionyl-tRNA(fMet) + (6R)-10-formyltetrahydrofolate = N-formyl-L-methionyl-tRNA(fMet) + (6S)-5,6,7,8-tetrahydrofolate + H(+). Functionally, attaches a formyl group to the free amino group of methionyl-tRNA(fMet). The formyl group appears to play a dual role in the initiator identity of N-formylmethionyl-tRNA by promoting its recognition by IF2 and preventing the misappropriation of this tRNA by the elongation apparatus. The polypeptide is Methionyl-tRNA formyltransferase (Escherichia coli O127:H6 (strain E2348/69 / EPEC)).